Consider the following 541-residue polypeptide: Protein VAPYRIN (541 aa).

Residues 4–138 form the MSP domain; that stretch reads LIKLDPSNIV…IDSAIKVMFV (135 aa). ANK repeat units lie at residues 176–205, 209–238, 242–271, 275–304, 309–338, 342–372, 374–392, 396–425, 429–458, and 462–491; these read QGQT…DIEA, VGST…NTEG, SVFR…RVDS, DGNT…RTDV, EGDT…TKYV, LGKT…CAAA, KGEV…VING, NGWT…DLDA, DGYT…DVEA, and KGVS…SREG.

Interacts with EX70I at the periarbuscular membrane (PAM) around the arbuscule hyphal tips. In terms of tissue distribution, expressed in roots.

It is found in the cytoplasm. Its subcellular location is the nucleus. The protein resides in the cell membrane. In terms of biological role, required for arbuscular mycorrhizal (AM) symbiosis with AM fungi (e.g. Glomus versiforme and Gigaspora gigantea) both during fungal passage across root epidermis and for arbuscule formation in cortical cells; this symbiosis promotes phosphorus (P) and copper (Cu) uptake. Essential for infection by symbiotic nitrogen-fixing rhizobial bacteria (e.g. Sinorhizobium meliloti) leading to the formation of root nodules. The chain is Protein VAPYRIN from Medicago truncatula (Barrel medic).